The following is a 569-amino-acid chain: Urease subunit alpha (569 aa).

Ni(2+)-binding residues include histidine 136, histidine 138, and lysine 219. Position 219 is an N6-carboxylysine (lysine 219). Residue histidine 221 coordinates substrate. Histidine 248 and histidine 274 together coordinate Ni(2+). Catalysis depends on histidine 322, which acts as the Proton donor. A Ni(2+)-binding site is contributed by aspartate 362.

This sequence belongs to the metallo-dependent hydrolases superfamily. Urease alpha subunit family. As to quaternary structure, heterotrimer of UreA (gamma), UreB (beta) and UreC (alpha) subunits. Three heterotrimers associate to form the active enzyme. The cofactor is Ni cation. Post-translationally, carboxylation allows a single lysine to coordinate two nickel ions.

The protein resides in the cytoplasm. It catalyses the reaction urea + 2 H2O + H(+) = hydrogencarbonate + 2 NH4(+). The protein operates within nitrogen metabolism; urea degradation; CO(2) and NH(3) from urea (urease route): step 1/1. This is Urease subunit alpha from Microcystis aeruginosa (strain NIES-843 / IAM M-2473).